Here is an 881-residue protein sequence, read N- to C-terminus: Ribonucleoside-diphosphate reductase large subunit (881 aa).

In terms of domain architecture, ATP-cone spans 69–160 (TIYLDHNGSI…MTNLHDNTSD (92 aa)). Substrate is bound by residues Thr271, 286–287 (SC), Gly315, 493–497 (NLCCE), and 675–679 (PTAST). A disulfide bridge connects residues Cys287 and Cys510. Catalysis depends on Asn493, which acts as the Proton acceptor. The active-site Cysteine radical intermediate is Cys495. Glu497 functions as the Proton acceptor in the catalytic mechanism.

Belongs to the ribonucleoside diphosphate reductase large chain family. As to quaternary structure, heterotetramer composed of a homodimer of the large subunit (R1) and a homodimer of the small subunit (R2). Larger multisubunit protein complex are also active, composed of (R1)n(R2)n.

The catalysed reaction is a 2'-deoxyribonucleoside 5'-diphosphate + [thioredoxin]-disulfide + H2O = a ribonucleoside 5'-diphosphate + [thioredoxin]-dithiol. Its activity is regulated as follows. Under complex allosteric control mediated by deoxynucleoside triphosphates and ATP binding. The type of nucleotide bound at the specificity site determines substrate preference. It seems probable that ATP makes the enzyme reduce CDP and UDP, dGTP favors ADP reduction and dTTP favors GDP reduction. Its function is as follows. Ribonucleoside-diphosphate reductase holoenzyme provides the precursors necessary for viral DNA synthesis. Allows virus growth in non-dividing cells. Catalyzes the biosynthesis of deoxyribonucleotides from the corresponding ribonucleotides. This chain is Ribonucleoside-diphosphate reductase large subunit (RNR1), found in Acanthamoeba polyphaga mimivirus (APMV).